A 576-amino-acid chain; its full sequence is Coilin (576 aa).

S105 carries the phosphoserine modification. T122 carries the post-translational modification Phosphothreonine. Disordered stretches follow at residues 125 to 330 and 352 to 389; these read DCKY…CLMS and RPGPGLSSQTAGAAGWRRSGSNGGGQAPGASPSVSLPA. Glycyl lysine isopeptide (Lys-Gly) (interchain with G-Cter in SUMO2) cross-links involve residues K127, K151, and K160. At S184 the chain carries Phosphoserine; by VRK1 and VRK2. Residues K204 and K209 each participate in a glycyl lysine isopeptide (Lys-Gly) (interchain with G-Cter in SUMO2) cross-link. The span at 214–225 shows a compositional bias: polar residues; that stretch reads QRCSSPKGSARN. The 1-1 repeat unit spans residues 223–226; it reads ARNS. The segment at 223–271 is 2 X 4 AA repeats of A-R-N-S; it reads ARNSLVKAKRKGSVSVCSKESPSSSSESESCDESISDGPSKVTLEARNS. Low complexity predominate over residues 235 to 250; it reads SVSVCSKESPSSSSES. Phosphoserine is present on residues S248, S250, S256, S271, and S272. A 1-2 repeat occupies 268–271; that stretch reads ARNS. Basic and acidic residues predominate over residues 270–285; that stretch reads NSSEKLPTELSKEEPS. Glycyl lysine isopeptide (Lys-Gly) (interchain with G-Cter in SUMO2) cross-links involve residues K274 and K281. The residue at position 290 (T290) is a Phosphothreonine. Glycyl lysine isopeptide (Lys-Gly) (interchain with G-Cter in SUMO2) cross-links involve residues K293 and K297. S301 is subject to Phosphoserine. Residues 301–320 show a composition bias toward low complexity; sequence SLTPSKGKTSGTTSSSSDSS. Phosphothreonine is present on T303. A 2-1 repeat occupies 386-389; it reads SLPA. A 2 X 4 AA repeats of S-L-P-A region spans residues 386 to 520; that stretch reads SLPASLGRGW…DIEILSSLPA (135 aa). The tract at residues 392 to 420 is required for interaction with SMN; the sequence is GRGWGREENLFSWKGAKGRGMRGRGRGRG. The residue at position 403 (S403) is a Phosphoserine. 4 consecutive repeat copies span residues 413 to 414, 415 to 416, 417 to 418, and 419 to 420. The 4 X 2 AA tandem repeats of R-G stretch occupies residues 413–420; the sequence is RGRGRGRG. Residue K444 forms a Glycyl lysine isopeptide (Lys-Gly) (interchain with G-Cter in SUMO2) linkage. Position 456 is a phosphothreonine (T456). One can recognise a Tudor; atypical domain in the interval 460 to 559; that stretch reads DYSLLPLLAA…ITVFWKELID (100 aa). Residues S487 and S489 each carry the phosphoserine modification. K496 is covalently cross-linked (Glycyl lysine isopeptide (Lys-Gly) (interchain with G-Cter in SUMO2)). The 2-2 repeat unit spans residues 517-520; that stretch reads SLPA. S566 is subject to Phosphoserine.

It belongs to the coilin family. As to quaternary structure, interacts with ANKS1B. Interacts with SMN1 (via Tudor domain). Interacts (via C-terminus) with AK6. Interacts with WRAP53/TCAB1. Interacts with HMBOX1. Interacts with PSME3; the interaction is inhibited by PSME3IP1. Interacts wit UBL5. In terms of processing, symmetrical dimethylation of arginine residues within the RG repeat region enhances affinity for SMN, and thus localization of SMN complexes to CBs. Post-translationally, phosphorylated by VRK1. Phosphorylation during mitosis is associated with disassembly of CBs. As to expression, found in all the cell types examined.

It localises to the nucleus. The protein localises to the cajal body. Functionally, component of nuclear coiled bodies, also known as Cajal bodies or CBs, which are involved in the modification and assembly of nucleoplasmic snRNPs. This chain is Coilin (COIL), found in Homo sapiens (Human).